Here is a 226-residue protein sequence, read N- to C-terminus: PKHD-type hydroxylase Pput_0892 (226 aa).

The region spanning 78–178 is the Fe2OG dioxygenase domain; sequence KVFPPLINCY…RYAAFFWTQS (101 aa). Fe cation contacts are provided by His96, Asp98, and His159. Arg169 lines the 2-oxoglutarate pocket.

Fe(2+) serves as cofactor. It depends on L-ascorbate as a cofactor.

The chain is PKHD-type hydroxylase Pput_0892 from Pseudomonas putida (strain ATCC 700007 / DSM 6899 / JCM 31910 / BCRC 17059 / LMG 24140 / F1).